Consider the following 158-residue polypeptide: UPF0225 protein Pput_1155 (158 aa).

Belongs to the UPF0225 family.

The polypeptide is UPF0225 protein Pput_1155 (Pseudomonas putida (strain ATCC 700007 / DSM 6899 / JCM 31910 / BCRC 17059 / LMG 24140 / F1)).